The chain runs to 102 residues: Large ribosomal subunit protein uL24 (102 aa).

It belongs to the universal ribosomal protein uL24 family. In terms of assembly, part of the 50S ribosomal subunit.

Functionally, one of two assembly initiator proteins, it binds directly to the 5'-end of the 23S rRNA, where it nucleates assembly of the 50S subunit. One of the proteins that surrounds the polypeptide exit tunnel on the outside of the subunit. The protein is Large ribosomal subunit protein uL24 of Agrobacterium fabrum (strain C58 / ATCC 33970) (Agrobacterium tumefaciens (strain C58)).